We begin with the raw amino-acid sequence, 531 residues long: NADH-quinone oxidoreductase subunit N (531 aa).

Transmembrane regions (helical) follow at residues 13-33 (LAPILIVLGAAVLGVLIEAFA), 45-65 (LALLAAAGAFGAIAWRWAEVI), 85-105 (PALAAQGIIAILAFVGILVIA), 150-170 (LFSVGGMLVFPAAGDLLTLFI), 200-220 (YFLLGAFSSALLLFGIALLYG), 242-262 (GLLVVGLVLLISGLLFKVGAV), 289-309 (VAAFGALLRVVYVVAPAMTWD), 310-330 (IQPFLWVVAVLTMVVGTVLAI), 339-359 (LAYSSVAHAGFLLVGVVAMSP), 365-385 (VFFYLLAYGLATIGAFALVAL), 415-435 (VATVFALYLLSFAGIPLTSGF), 460-480 (ASAAAAFFYVRIIVLMFFTSP), and 496-516 (GFTAVAVALTAAATLVLGVWP).

It belongs to the complex I subunit 2 family. As to quaternary structure, NDH-1 is composed of 14 different subunits. Subunits NuoA, H, J, K, L, M, N constitute the membrane sector of the complex.

It is found in the cell membrane. The enzyme catalyses a quinone + NADH + 5 H(+)(in) = a quinol + NAD(+) + 4 H(+)(out). Its function is as follows. NDH-1 shuttles electrons from NADH, via FMN and iron-sulfur (Fe-S) centers, to quinones in the respiratory chain. The immediate electron acceptor for the enzyme in this species is believed to be a menaquinone. Couples the redox reaction to proton translocation (for every two electrons transferred, four hydrogen ions are translocated across the cytoplasmic membrane), and thus conserves the redox energy in a proton gradient. This chain is NADH-quinone oxidoreductase subunit N, found in Beutenbergia cavernae (strain ATCC BAA-8 / DSM 12333 / CCUG 43141 / JCM 11478 / NBRC 16432 / NCIMB 13614 / HKI 0122).